A 284-amino-acid chain; its full sequence is 4-diphosphocytidyl-2-C-methyl-D-erythritol kinase (284 aa).

The active site involves Lys-14. 97–107 provides a ligand contact to ATP; that stretch reads PMGGGVGGGSS. The active site involves Asp-139.

It belongs to the GHMP kinase family. IspE subfamily.

The catalysed reaction is 4-CDP-2-C-methyl-D-erythritol + ATP = 4-CDP-2-C-methyl-D-erythritol 2-phosphate + ADP + H(+). It participates in isoprenoid biosynthesis; isopentenyl diphosphate biosynthesis via DXP pathway; isopentenyl diphosphate from 1-deoxy-D-xylulose 5-phosphate: step 3/6. Its function is as follows. Catalyzes the phosphorylation of the position 2 hydroxy group of 4-diphosphocytidyl-2C-methyl-D-erythritol. This is 4-diphosphocytidyl-2-C-methyl-D-erythritol kinase from Pseudoalteromonas translucida (strain TAC 125).